We begin with the raw amino-acid sequence, 242 residues long: Demethylmenaquinone methyltransferase (242 aa).

Residues T74 and D93 each contribute to the S-adenosyl-L-methionine site.

This sequence belongs to the class I-like SAM-binding methyltransferase superfamily. MenG/UbiE family.

The catalysed reaction is a 2-demethylmenaquinol + S-adenosyl-L-methionine = a menaquinol + S-adenosyl-L-homocysteine + H(+). It functions in the pathway quinol/quinone metabolism; menaquinone biosynthesis; menaquinol from 1,4-dihydroxy-2-naphthoate: step 2/2. Methyltransferase required for the conversion of demethylmenaquinol (DMKH2) to menaquinol (MKH2). The chain is Demethylmenaquinone methyltransferase from Chlorobaculum tepidum (strain ATCC 49652 / DSM 12025 / NBRC 103806 / TLS) (Chlorobium tepidum).